The chain runs to 361 residues: Peptide chain release factor 1 (361 aa).

Gln235 is subject to N5-methylglutamine.

The protein belongs to the prokaryotic/mitochondrial release factor family. Methylated by PrmC. Methylation increases the termination efficiency of RF1.

It is found in the cytoplasm. In terms of biological role, peptide chain release factor 1 directs the termination of translation in response to the peptide chain termination codons UAG and UAA. The polypeptide is Peptide chain release factor 1 (Rhodopseudomonas palustris (strain BisB18)).